The following is a 338-amino-acid chain: DNA-directed RNA polymerase subunit alpha (338 aa).

Residues 1–226 (MLIAQRPTLS…ELFGLARELN (226 aa)) form an alpha N-terminal domain (alpha-NTD) region. The tract at residues 240-338 (DEQLAADLAL…DDAFVEDEQY (99 aa)) is alpha C-terminal domain (alpha-CTD).

This sequence belongs to the RNA polymerase alpha chain family. In terms of assembly, homodimer. The RNAP catalytic core consists of 2 alpha, 1 beta, 1 beta' and 1 omega subunit. When a sigma factor is associated with the core the holoenzyme is formed, which can initiate transcription.

The catalysed reaction is RNA(n) + a ribonucleoside 5'-triphosphate = RNA(n+1) + diphosphate. Functionally, DNA-dependent RNA polymerase catalyzes the transcription of DNA into RNA using the four ribonucleoside triphosphates as substrates. The protein is DNA-directed RNA polymerase subunit alpha of Nocardioides sp. (strain ATCC BAA-499 / JS614).